We begin with the raw amino-acid sequence, 422 residues long: Serine--tRNA ligase (422 aa).

Residue 238–240 (TSE) participates in L-serine binding. 269–271 (RKE) contributes to the ATP binding site. An L-serine-binding site is contributed by Glu292. 356 to 359 (EISS) lines the ATP pocket. Ser390 contacts L-serine.

This sequence belongs to the class-II aminoacyl-tRNA synthetase family. Type-1 seryl-tRNA synthetase subfamily. In terms of assembly, homodimer. The tRNA molecule binds across the dimer.

It is found in the cytoplasm. The catalysed reaction is tRNA(Ser) + L-serine + ATP = L-seryl-tRNA(Ser) + AMP + diphosphate + H(+). It catalyses the reaction tRNA(Sec) + L-serine + ATP = L-seryl-tRNA(Sec) + AMP + diphosphate + H(+). It functions in the pathway aminoacyl-tRNA biosynthesis; selenocysteinyl-tRNA(Sec) biosynthesis; L-seryl-tRNA(Sec) from L-serine and tRNA(Sec): step 1/1. Functionally, catalyzes the attachment of serine to tRNA(Ser). Is also able to aminoacylate tRNA(Sec) with serine, to form the misacylated tRNA L-seryl-tRNA(Sec), which will be further converted into selenocysteinyl-tRNA(Sec). In Helicobacter hepaticus (strain ATCC 51449 / 3B1), this protein is Serine--tRNA ligase.